The chain runs to 286 residues: Bifunctional protein FolD 2 (286 aa).

NADP(+) contacts are provided by residues 165-167 (GRG), T192, and V233.

This sequence belongs to the tetrahydrofolate dehydrogenase/cyclohydrolase family. As to quaternary structure, homodimer.

The enzyme catalyses (6R)-5,10-methylene-5,6,7,8-tetrahydrofolate + NADP(+) = (6R)-5,10-methenyltetrahydrofolate + NADPH. It carries out the reaction (6R)-5,10-methenyltetrahydrofolate + H2O = (6R)-10-formyltetrahydrofolate + H(+). It functions in the pathway one-carbon metabolism; tetrahydrofolate interconversion. Its function is as follows. Catalyzes the oxidation of 5,10-methylenetetrahydrofolate to 5,10-methenyltetrahydrofolate and then the hydrolysis of 5,10-methenyltetrahydrofolate to 10-formyltetrahydrofolate. In Rhodococcus jostii (strain RHA1), this protein is Bifunctional protein FolD 2.